Reading from the N-terminus, the 254-residue chain is Thiazole synthase (254 aa).

Catalysis depends on K96, which acts as the Schiff-base intermediate with DXP. 1-deoxy-D-xylulose 5-phosphate is bound by residues G157, 183-184 (AG), and 205-206 (NT).

It belongs to the ThiG family. As to quaternary structure, homotetramer. Forms heterodimers with either ThiH or ThiS.

The protein resides in the cytoplasm. The enzyme catalyses [ThiS sulfur-carrier protein]-C-terminal-Gly-aminoethanethioate + 2-iminoacetate + 1-deoxy-D-xylulose 5-phosphate = [ThiS sulfur-carrier protein]-C-terminal Gly-Gly + 2-[(2R,5Z)-2-carboxy-4-methylthiazol-5(2H)-ylidene]ethyl phosphate + 2 H2O + H(+). The protein operates within cofactor biosynthesis; thiamine diphosphate biosynthesis. Functionally, catalyzes the rearrangement of 1-deoxy-D-xylulose 5-phosphate (DXP) to produce the thiazole phosphate moiety of thiamine. Sulfur is provided by the thiocarboxylate moiety of the carrier protein ThiS. In vitro, sulfur can be provided by H(2)S. In Clostridium perfringens (strain 13 / Type A), this protein is Thiazole synthase.